The following is a 273-amino-acid chain: MMKRQFEDVTRIVIKIGTSSLVLPTGKINLEKIDQLAFVISSLMNKGKEVILVSSGAMGFGLDILKMEKRPTNLAKQQAVSSVGQVAMMSLYSQIFAHYQTNVSQILLTRDIVVFPESLANVTNAFESLISLGIVPIVNENDAVSVDEMDHATKFGDNDRLSAVVAGITKADLLIMLSDIDGLFDKSPTIYEDAQLRSHVAVITQEIIASAGGAGSKFGTGGMLSKVQSAQMVFENKGQMVLMNGANPRDILRVLEGQPLGTWFKQIEEVRHD.

Residue Lys-15 coordinates ATP. Ser-55, Asp-142, and Asn-158 together coordinate substrate. ATP is bound by residues 178-179 (SD) and 220-226 (TGGMLSK).

This sequence belongs to the glutamate 5-kinase family.

It localises to the cytoplasm. It catalyses the reaction L-glutamate + ATP = L-glutamyl 5-phosphate + ADP. Its pathway is amino-acid biosynthesis; L-proline biosynthesis; L-glutamate 5-semialdehyde from L-glutamate: step 1/2. Functionally, catalyzes the transfer of a phosphate group to glutamate to form L-glutamate 5-phosphate. The polypeptide is Glutamate 5-kinase (Streptococcus pyogenes serotype M2 (strain MGAS10270)).